The sequence spans 745 residues: 5-methyltetrahydropteroyltriglutamate--homocysteine methyltransferase (745 aa).

Residues 17 to 20 (RELK) and Lys111 each bind 5-methyltetrahydropteroyltri-L-glutamate. Residues 421-423 (IGS) and Glu474 each bind L-homocysteine. L-methionine-binding positions include 421–423 (IGS) and Glu474. 5-methyltetrahydropteroyltri-L-glutamate-binding positions include 505–506 (RC) and Trp551. Position 589 (Asp589) interacts with L-homocysteine. Asp589 contributes to the L-methionine binding site. Glu595 contributes to the 5-methyltetrahydropteroyltri-L-glutamate binding site. Positions 631, 633, and 655 each coordinate Zn(2+). His684 functions as the Proton donor in the catalytic mechanism. Position 716 (Cys716) interacts with Zn(2+).

It belongs to the vitamin-B12 independent methionine synthase family. It depends on Zn(2+) as a cofactor.

The catalysed reaction is 5-methyltetrahydropteroyltri-L-glutamate + L-homocysteine = tetrahydropteroyltri-L-glutamate + L-methionine. It functions in the pathway amino-acid biosynthesis; L-methionine biosynthesis via de novo pathway; L-methionine from L-homocysteine (MetE route): step 1/1. Catalyzes the transfer of a methyl group from 5-methyltetrahydrofolate to homocysteine resulting in methionine formation. The protein is 5-methyltetrahydropteroyltriglutamate--homocysteine methyltransferase of Thermodesulfovibrio yellowstonii (strain ATCC 51303 / DSM 11347 / YP87).